The chain runs to 139 residues: Lysozyme (139 aa).

The first 19 residues, 1–19 (MTKYVILLAVLAFALHCDA), serve as a signal peptide directing secretion. Residues 20–139 (KRFTRCGLVQ…QHGLPDISDC (120 aa)) enclose the C-type lysozyme domain. Cystine bridges form between Cys25–Cys139, Cys46–Cys129, Cys81–Cys95, and Cys91–Cys109. Residues Glu51 and Asp69 contribute to the active site.

This sequence belongs to the glycosyl hydrolase 22 family.

The enzyme catalyses Hydrolysis of (1-&gt;4)-beta-linkages between N-acetylmuramic acid and N-acetyl-D-glucosamine residues in a peptidoglycan and between N-acetyl-D-glucosamine residues in chitodextrins.. In terms of biological role, lysozymes have primarily a bacteriolytic function; those in tissues and body fluids are associated with the monocyte-macrophage system and enhance the activity of immunoagents. This Hyalophora cecropia (Cecropia moth) protein is Lysozyme.